An 800-amino-acid polypeptide reads, in one-letter code: Internalin A (800 aa).

Residues 1 to 35 form the signal peptide; sequence MRKKRYVWLKSILVAILVFGSGVWINTSNGTNAQA. An LRRNT domain is found at 36–76; it reads ATITQDTPINQIFTDTALAEKMKTVLGKTNVTDTVSQTDLD. 15 LRR repeats span residues 77–98, 99–120, 121–142, 143–164, 165–186, 187–207, 208–229, 230–251, 252–273, 274–295, 296–317, 318–339, 340–361, 362–383, and 384–405; these read QVTT…EYLN, NLTQ…KNLT, KLVD…ANLT, NLTG…KNLT, NLNR…SGLT, SLQQ…ANLT, TLER…AKLT, NLES…GILT, NLDE…ASLT, NLTD…SGLT, KLTE…AGLT, ALTN…SNLK, NLTY…SSLT, KLQR…ANLT, and NINW…ANLT. The 90-residue stretch at 416-505 folds into the LRRCT domain; it reads AWTNAPVNYK…AIFNVKFHVD (90 aa). The stretch at 518–587 is one B-1 repeat; the sequence is LLTEPAKPVK…TTSQTVDYQG (70 aa). The segment at 518–706 is 3 X approximate tandem repeats, type B; the sequence is LLTEPAKPVK…ITLYAQFTKN (189 aa). The B-2 repeat unit spans residues 588–657; the sequence is LLQEPTAPTK…STTQAVDYQG (70 aa). One copy of the B-3 repeat lies at 658–706; the sequence is LLKEPKAPTKAGYTFKGWYDEKTDGKKWDFATDKMPANDITLYAQFTKN. Residues 705-757 form a disordered region; that stretch reads KNPVAPPTTGGNTPPTTNNGGNTTPPSANIPGSDTSNTSTGNSASTTSTMNAY. The span at 711–753 shows a compositional bias: low complexity; sequence PTTGGNTPPTTNNGGNTTPPSANIPGSDTSNTSTGNSASTTST. The LPXTG sorting signal signature appears at 767–771; sequence LPTTG. Pentaglycyl murein peptidoglycan amidated threonine is present on T770. Positions 771 to 800 are cleaved as a propeptide — removed by sortase A; the sequence is GDSDNALYLLLGLLAVGTAMALTKKARASK.

It belongs to the internalin family. Interacts with host (human) cadherin-1 (CDH1). The formation of the complex between inlA and cadherin-1 is calcium-dependent. Mutagenesis studies show it is possible to increase the affinity of InlA for CDH1 by rational engineering of InlA residues.

It localises to the secreted. It is found in the cell wall. Its activity is regulated as follows. Bacterial uptake is inhibited by EDTA and by anti-E-cadherin antibodies. In terms of biological role, mediates the entry of L.monocytogenes into host intestinal epithelial cells; transformation with inlA alone allows L.innocua (a non-invasive species) to be taken up by host cells. Binds to human receptor cadherin-1 (E-cadherin, CDH1); the chicken homolog of cadherin-1 but not cadherin-2 function as receptors. Mouse cadherin-1 is not a receptor, however mutating a single surface-exposed residue (Glu-172 to Pro in mouse) allows cadherin-1 to act as a receptor for InlA. The polypeptide is Internalin A (Listeria monocytogenes serovar 1/2a (strain ATCC BAA-679 / EGD-e)).